We begin with the raw amino-acid sequence, 939 residues long: U3 small nucleolar RNA-associated protein 21 (939 aa).

Serine 2 bears the N-acetylserine mark. WD repeat units lie at residues 40–71, 81–111, 119–158, 168–201, 208–245, 252–287, 295–347, 354–388, 415–454, 463–497, 505–541, 546–581, 583–624, and 626–664; these read ATGT…LLFV, VALS…HLLE, EHLC…TKLT, VSLQ…LVFT, QITT…RTIK, SSLS…IHVL, YGGV…RSRG, SYIA…QSQE, VALA…GRWT, VKSV…LRKK, VTGI…GKLK, ITAM…VRQL, GHSN…DGII, and DNVA…KTVS. At serine 772 the chain carries Phosphoserine.

Interacts with snoRNA U3. Interacts with MPP10. Interacts (via WD repeats) with UTP18. Component of the ribosomal small subunit (SSU) processome composed of at least 40 protein subunits and snoRNA U3.

Its subcellular location is the nucleus. It localises to the nucleolus. Functionally, involved in nucleolar processing of pre-18S ribosomal RNA and ribosome assembly. The polypeptide is U3 small nucleolar RNA-associated protein 21 (UTP21) (Saccharomyces cerevisiae (strain ATCC 204508 / S288c) (Baker's yeast)).